Here is a 471-residue protein sequence, read N- to C-terminus: Serine/threonine-protein kinase sid1 (471 aa).

The 252-residue stretch at 9–260 folds into the Protein kinase domain; that stretch reads YTLLRKLGSG…AKELLQHPFI (252 aa). Residues 15–23 and lysine 38 each bind ATP; that span reads LGSGSFGVV. Aspartate 129 serves as the catalytic Proton acceptor.

Belongs to the protein kinase superfamily. STE Ser/Thr protein kinase family. STE20 subfamily. In terms of assembly, interacts with cdc14.

The protein resides in the cytoplasm. Its subcellular location is the cytoskeleton. It localises to the microtubule organizing center. It is found in the spindle pole body. It carries out the reaction L-seryl-[protein] + ATP = O-phospho-L-seryl-[protein] + ADP + H(+). The catalysed reaction is L-threonyl-[protein] + ATP = O-phospho-L-threonyl-[protein] + ADP + H(+). Functionally, has a role in the septation initiation network (SIN) required for cytokinesis. The polypeptide is Serine/threonine-protein kinase sid1 (sid1) (Schizosaccharomyces pombe (strain 972 / ATCC 24843) (Fission yeast)).